Reading from the N-terminus, the 646-residue chain is Lipoteichoic acid synthase (646 aa).

Residues 1–7 (MSLPKKK) are Cytoplasmic-facing. The chain crosses the membrane as a helical span at residues 8–28 (IGIFAFFLLTVFTITLKTYFS). At 29 to 43 (YYVDFSLGVKGLVQN) the chain is on the extracellular side. A helical transmembrane segment spans residues 44 to 64 (LILIMNPYSLIALVLSVFLFF). Residues 65–68 (KGKK) lie on the Cytoplasmic side of the membrane. A helical transmembrane segment spans residues 69-89 (AFWFIFIGGFLLTFLLYANVV). The Extracellular segment spans residues 90–119 (YFRFFSDFLTFSTLNQAGNVESMGGAVSAS). A helical membrane pass occupies residues 120–140 (FKWYDFVYFIDTIIYLAILIF). The Cytoplasmic segment spans residues 141–153 (KRKWLDNRAFSKK). Residues 154–174 (FVPVVMATSVALFFLNLAFAE) traverse the membrane as a helical segment. Residues 175–646 (TDRPELLTRT…KSGPKGNEKK (472 aa)) are Extracellular-facing. Positions 255 and 300 each coordinate Mn(2+). The active site involves threonine 300. Position 416 (histidine 416) interacts with substrate. The Mn(2+) site is built by aspartate 475 and histidine 476.

It belongs to the LTA synthase family. In terms of processing, proteolytically cleaved.

The protein resides in the cell membrane. The protein localises to the secreted. It functions in the pathway cell wall biogenesis; lipoteichoic acid biosynthesis. Catalyzes the polymerization of lipoteichoic acid (LTA) polyglycerol phosphate, a reaction that presumably uses phosphatidylglycerol (PG) as substrate. Is required for staphylococcal growth and cell division process. In Staphylococcus epidermidis (strain ATCC 12228 / FDA PCI 1200), this protein is Lipoteichoic acid synthase (ltaS).